The chain runs to 661 residues: Hemocyanin C chain (661 aa).

A disulfide bond links cysteine 3 and cysteine 557. Residues histidine 200, histidine 204, histidine 230, histidine 350, histidine 354, and histidine 390 each coordinate Cu cation. N-linked (GlcNAc...) asparagine glycosylation is present at asparagine 476.

It belongs to the tyrosinase family. Hemocyanin subfamily. Hexamer of a number of different chains, of which A, B, and C have been identified. As to expression, hemolymph.

The protein resides in the secreted. It is found in the extracellular space. In terms of biological role, hemocyanins are copper-containing oxygen carriers occurring freely dissolved in the hemolymph of many mollusks and arthropods. In Panulirus interruptus (California spiny lobster), this protein is Hemocyanin C chain.